Reading from the N-terminus, the 281-residue chain is Small ribosomal subunit biogenesis GTPase RsgA (281 aa).

A CP-type G domain is found at Gln-59–Leu-212. Residues Thr-108 to Asp-111 and Gly-155 to Thr-163 contribute to the GTP site. The Zn(2+) site is built by Cys-235, Cys-240, His-242, and Cys-250.

The protein belongs to the TRAFAC class YlqF/YawG GTPase family. RsgA subfamily. As to quaternary structure, monomer. Associates with 30S ribosomal subunit, binds 16S rRNA. The cofactor is Zn(2+).

Its subcellular location is the cytoplasm. In terms of biological role, one of several proteins that assist in the late maturation steps of the functional core of the 30S ribosomal subunit. Helps release RbfA from mature subunits. May play a role in the assembly of ribosomal proteins into the subunit. Circularly permuted GTPase that catalyzes slow GTP hydrolysis, GTPase activity is stimulated by the 30S ribosomal subunit. The protein is Small ribosomal subunit biogenesis GTPase RsgA of Mycoplasmopsis agalactiae (strain NCTC 10123 / CIP 59.7 / PG2) (Mycoplasma agalactiae).